A 363-amino-acid chain; its full sequence is Fructose-1,6-bisphosphate aldolase/phosphatase (363 aa).

Asp-11 acts as the Proton acceptor; for FBP phosphatase activity in catalysis. Positions 11, 18, 51, and 52 each coordinate Mg(2+). His-18 serves as a coordination point for beta-D-fructose 1,6-bisphosphate. A dihydroxyacetone phosphate-binding site is contributed by His-18. Tyr-89 serves as a coordination point for beta-D-fructose 1,6-bisphosphate. Gln-93 lines the Mg(2+) pocket. Beta-D-fructose 1,6-bisphosphate is bound at residue 102-103; that stretch reads GN. Asp-130 is a Mg(2+) binding site. Lys-131 serves as a coordination point for beta-D-fructose 1,6-bisphosphate. Residue Lys-131 participates in dihydroxyacetone phosphate binding. Tyr-230 serves as the catalytic Proton donor/acceptor; for FBP aldolase activity. Mg(2+)-binding residues include Lys-233, Asp-234, and Asp-235. Lys-233 (schiff-base intermediate with DHAP; for FBP aldolase activity) is an active-site residue. Beta-D-fructose 1,6-bisphosphate-binding positions include 243-244, Arg-267, and Tyr-348; that span reads QK. Arg-267 contributes to the dihydroxyacetone phosphate binding site.

This sequence belongs to the FBP aldolase/phosphatase family. In terms of assembly, homooctamer; dimer of tetramers. Mg(2+) serves as cofactor.

The enzyme catalyses beta-D-fructose 1,6-bisphosphate + H2O = beta-D-fructose 6-phosphate + phosphate. The catalysed reaction is beta-D-fructose 1,6-bisphosphate = D-glyceraldehyde 3-phosphate + dihydroxyacetone phosphate. It participates in carbohydrate biosynthesis; gluconeogenesis. Its function is as follows. Catalyzes two subsequent steps in gluconeogenesis: the aldol condensation of dihydroxyacetone phosphate (DHAP) and glyceraldehyde-3-phosphate (GA3P) to fructose-1,6-bisphosphate (FBP), and the dephosphorylation of FBP to fructose-6-phosphate (F6P). The protein is Fructose-1,6-bisphosphate aldolase/phosphatase of Thermus thermophilus (strain ATCC BAA-163 / DSM 7039 / HB27).